The sequence spans 332 residues: uncharacterized protein (332 aa).

Residues methionine 185 to isoleucine 205 form a helical membrane-spanning segment.

It is found in the host membrane. This is an uncharacterized protein from Sulfolobus islandicus filamentous virus (isolate Iceland/Hveragerdi) (SIFV).